Here is a 468-residue protein sequence, read N- to C-terminus: 3-isopropylmalate dehydratase large subunit (468 aa).

[4Fe-4S] cluster is bound by residues C346, C406, and C409.

It belongs to the aconitase/IPM isomerase family. LeuC type 1 subfamily. Heterodimer of LeuC and LeuD. [4Fe-4S] cluster serves as cofactor.

It catalyses the reaction (2R,3S)-3-isopropylmalate = (2S)-2-isopropylmalate. It functions in the pathway amino-acid biosynthesis; L-leucine biosynthesis; L-leucine from 3-methyl-2-oxobutanoate: step 2/4. Functionally, catalyzes the isomerization between 2-isopropylmalate and 3-isopropylmalate, via the formation of 2-isopropylmaleate. This Cyanothece sp. (strain PCC 7425 / ATCC 29141) protein is 3-isopropylmalate dehydratase large subunit.